Consider the following 380-residue polypeptide: Palmitoyltransferase ZDHHC18 (380 aa).

The segment at 1–59 (MKDCEYQQISPGAAPPPASPGARRPGPAAPPAPSPGPAPGAPRWSGSGSGSGSLGRRPR) is disordered. Topologically, residues 1-82 (MKDCEYQQIS…CGGRLMLAGH (82 aa)) are cytoplasmic. S19 is subject to Phosphoserine. Positions 27-40 (PAAPPAPSPGPAPG) are enriched in pro residues. Residues 83–103 (GGVFALTLLLILSTTILFFVF) traverse the membrane as a helical segment. Residues 104 to 111 (DCPYLART) lie on the Lumenal side of the membrane. Residues 112–132 (LTLAIPIIAAILFFFVMSCLL) form a helical membrane-spanning segment. Over 133–227 (QTSFTDPGIL…GNCVGRRNYR (95 aa)) the chain is Cytoplasmic. A DHHC domain is found at 184–234 (KYCFTCKMFRPPRTSHCSVCDNCVERFDHHCPWVGNCVGRRNYRFFYAFIL). The active-site S-palmitoyl cysteine intermediate is the C214. Residues 228-248 (FFYAFILSLSFLTAFIFACVV) traverse the membrane as a helical segment. Residues 249–269 (THLTLLSQGSNFLSALKKTPA) are Lumenal-facing. The chain crosses the membrane as a helical span at residues 270-290 (SVLELVICFFSIWSILGLSGF). Residues 291–380 (HTYLVASNLT…PDASMVGGHP (90 aa)) are Cytoplasmic-facing. A disordered region spans residues 355–380 (ALPSPIRSDDPACGAKPDASMVGGHP).

Belongs to the DHHC palmitoyltransferase family. ERF2/ZDHHC9 subfamily. In terms of tissue distribution, ubiquitously expressed.

It localises to the golgi apparatus membrane. It carries out the reaction L-cysteinyl-[protein] + hexadecanoyl-CoA = S-hexadecanoyl-L-cysteinyl-[protein] + CoA. Its function is as follows. Palmitoyltransferase that catalyzes the addition of palmitate onto various protein substrates, such as CGAS, HRAS and LCK. Palmitoylates HRAS and LCK. Acts as a negative regulator of the cGAS-STING pathway be mediating palmitoylation and inactivation of CGAS. May also have a palmitoyltransferase activity toward the beta-2 adrenergic receptor/ADRB2 and therefore regulate G protein-coupled receptor signaling. This chain is Palmitoyltransferase ZDHHC18, found in Mus musculus (Mouse).